The sequence spans 126 residues: Methylglyoxal synthase (126 aa).

The region spanning 1–126 (MAGSKCLALI…AIKLLPTLEA (126 aa)) is the MGS-like domain. Substrate is bound by residues His-12, Lys-16, 38 to 41 (TGTT), and 59 to 60 (SG). The active-site Proton donor/acceptor is the Asp-65. His-92 contacts substrate.

This sequence belongs to the methylglyoxal synthase family.

The enzyme catalyses dihydroxyacetone phosphate = methylglyoxal + phosphate. Its function is as follows. Catalyzes the formation of methylglyoxal from dihydroxyacetone phosphate. This is Methylglyoxal synthase from Rhizobium etli (strain ATCC 51251 / DSM 11541 / JCM 21823 / NBRC 15573 / CFN 42).